The chain runs to 103 residues: NAD(P)H-quinone oxidoreductase subunit 4L, organellar chromatophore (103 aa).

A run of 3 helical transmembrane segments spans residues 3-23, 32-52, and 63-83; these read IMLE…VWGL, VLMS…AFSN, and VFAI…LAIL.

It belongs to the complex I subunit 4L family. NDH is composed of at least 16 different subunits, 5 of which are encoded in the nucleus.

It is found in the plastid. The protein localises to the organellar chromatophore thylakoid membrane. It catalyses the reaction a plastoquinone + NADH + (n+1) H(+)(in) = a plastoquinol + NAD(+) + n H(+)(out). The catalysed reaction is a plastoquinone + NADPH + (n+1) H(+)(in) = a plastoquinol + NADP(+) + n H(+)(out). Its function is as follows. NDH shuttles electrons from NAD(P)H:plastoquinone, via FMN and iron-sulfur (Fe-S) centers, to quinones in the photosynthetic chain and possibly in a chloroplast respiratory chain. The immediate electron acceptor for the enzyme in this species is believed to be plastoquinone. Couples the redox reaction to proton translocation, and thus conserves the redox energy in a proton gradient. This chain is NAD(P)H-quinone oxidoreductase subunit 4L, organellar chromatophore, found in Paulinella chromatophora.